Reading from the N-terminus, the 298-residue chain is MQDLSAVKAFHALCQHKSLTAAAKALEQPKSTLSRRLAQLEEDLGQSLLMRQGNRLTLTKAGEVFAVYSEQLLELANKSQEALQELNNQVTGELTLVVHPNLIRGWLSQVLDEFMQQHSTLKIRLLSQFQHSDEVFEPDLIIWIEHAAPMGYRKERLGYWRYAAYASPKYLAHRDKPTHPRELIHHPWIDFIACRRAELELHHPEFGSYSLPALESRLQSDNLAMQADAIAKGRGIGLLPTWFANGFETAHPGSLIPCVNGWQSQPTEINCFYPLGRHPLRLRLFIDALRQARPDEWQ.

Residues 1–59 (MQDLSAVKAFHALCQHKSLTAAAKALEQPKSTLSRRLAQLEEDLGQSLLMRQGNRLTLT) form the HTH lysR-type domain. Residues 19-38 (LTAAAKALEQPKSTLSRRLA) constitute a DNA-binding region (H-T-H motif).

Belongs to the LysR transcriptional regulatory family.

In terms of biological role, transcription activation of the irgA gene. In the presence of sufficient iron, transcription of both irgA and irgB is negatively regulated by a fur-like protein. In low iron conditions, negative regulation of transcription is removed, and production of irgB leads to positive transcriptional activation of irgA. The polypeptide is Iron-regulated virulence regulatory protein IrgB (irgB) (Vibrio cholerae serotype O1 (strain ATCC 39315 / El Tor Inaba N16961)).